A 105-amino-acid polypeptide reads, in one-letter code: Large ribosomal subunit protein uL24 (105 aa).

The protein belongs to the universal ribosomal protein uL24 family. Part of the 50S ribosomal subunit.

Its function is as follows. One of two assembly initiator proteins, it binds directly to the 5'-end of the 23S rRNA, where it nucleates assembly of the 50S subunit. One of the proteins that surrounds the polypeptide exit tunnel on the outside of the subunit. The sequence is that of Large ribosomal subunit protein uL24 from Mycolicibacterium vanbaalenii (strain DSM 7251 / JCM 13017 / BCRC 16820 / KCTC 9966 / NRRL B-24157 / PYR-1) (Mycobacterium vanbaalenii).